A 516-amino-acid chain; its full sequence is GPI mannosyltransferase 4 (516 aa).

Residues 1–5 lie on the Lumenal side of the membrane; sequence MMRYQ. A helical transmembrane segment spans residues 6-26; the sequence is WWLYLVYAIGLMLCLGPSYIH. Over 27-60 the chain is Cytoplasmic; that stretch reads PDEHFQCIEILAMQFMKVKGTIPWEFKSKFAARS. The chain crosses the membrane as a helical span at residues 61–81; it reads YGPLLLVYGPLFTILESFPEI. The Lumenal segment spans residues 82 to 175; it reads QDNPALILYS…IQRSNFKNSV (94 aa). The chain crosses the membrane as a helical span at residues 176 to 196; sequence ILGLIFSFGVFNRVTFPAFIF. The Cytoplasmic segment spans residues 197 to 210; the sequence is LPCLILFWKFYRVH. The chain crosses the membrane as a helical span at residues 211 to 231; that stretch reads WKSFSLLLLSFSFSSCLFVLI. Residues 232–270 lie on the Lumenal side of the membrane; sequence DTNIYNNGKGFVITPLNNLKYNLNVQNLQVHGLHPRYTH. The helical transmembrane segment at 271–291 threads the bilayer; sequence LLVNLPQIVGPVLLLAIFSGY. Residues 292–295 are Cytoplasmic-facing; sequence KLDK. Residues 296–316 traverse the membrane as a helical segment; that stretch reads LSTYAIISGLLFLSFFQHQEL. A topological domain (lumenal) is located at residue Arg317. The helical transmembrane segment at 318–338 threads the bilayer; it reads FLVPLVPLLVTNLNWTPLSST. The Cytoplasmic segment spans residues 339 to 348; it reads LVNKKIFKGT. A helical membrane pass occupies residues 349–369; that stretch reads WLLFNIIMAFIMGISHQAGII. At 370-516 the chain is on the lumenal side; that stretch reads QFLGDYFHFR…GLTVYSIELL (147 aa). 2 N-linked (GlcNAc...) asparagine glycosylation sites follow: Asn403 and Asn452.

This sequence belongs to the glycosyltransferase 22 family. PIGZ subfamily.

It localises to the endoplasmic reticulum membrane. Its pathway is glycolipid biosynthesis; glycosylphosphatidylinositol-anchor biosynthesis. In terms of biological role, alpha-1,2-mannosyltransferase involved in glycosylphosphatidylinositol-anchor biosynthesis. Transfers a fourth mannose to trimannosyl-GPIs during GPI precursor assembly. The presence of a fourth mannose in GPI is essential in fungi. Involved in plasmid maintenance with SMP2. The sequence is that of GPI mannosyltransferase 4 (SMP3) from Saccharomyces cerevisiae (strain ATCC 204508 / S288c) (Baker's yeast).